A 637-amino-acid chain; its full sequence is 1-deoxy-D-xylulose-5-phosphate synthase (637 aa).

Thiamine diphosphate-binding positions include histidine 88 and 129–131 (GHS). Aspartate 160 serves as a coordination point for Mg(2+). Residues 161–162 (GA), asparagine 189, phenylalanine 293, and glutamate 370 contribute to the thiamine diphosphate site. Asparagine 189 is a binding site for Mg(2+).

The protein belongs to the transketolase family. DXPS subfamily. As to quaternary structure, homodimer. It depends on Mg(2+) as a cofactor. The cofactor is thiamine diphosphate.

The catalysed reaction is D-glyceraldehyde 3-phosphate + pyruvate + H(+) = 1-deoxy-D-xylulose 5-phosphate + CO2. Its pathway is metabolic intermediate biosynthesis; 1-deoxy-D-xylulose 5-phosphate biosynthesis; 1-deoxy-D-xylulose 5-phosphate from D-glyceraldehyde 3-phosphate and pyruvate: step 1/1. Functionally, catalyzes the acyloin condensation reaction between C atoms 2 and 3 of pyruvate and glyceraldehyde 3-phosphate to yield 1-deoxy-D-xylulose-5-phosphate (DXP). The polypeptide is 1-deoxy-D-xylulose-5-phosphate synthase (Acinetobacter baumannii (strain AYE)).